Here is a 102-residue protein sequence, read N- to C-terminus: Large ribosomal subunit protein bL21 (102 aa).

Belongs to the bacterial ribosomal protein bL21 family. As to quaternary structure, part of the 50S ribosomal subunit. Contacts protein L20.

Its function is as follows. This protein binds to 23S rRNA in the presence of protein L20. The protein is Large ribosomal subunit protein bL21 of Geobacter metallireducens (strain ATCC 53774 / DSM 7210 / GS-15).